The primary structure comprises 238 residues: Ion-translocating oxidoreductase complex subunit E (238 aa).

A run of 5 helical transmembrane segments spans residues leucine 41–valine 61, leucine 71–alanine 91, glutamate 95–glycine 115, serine 130–leucine 150, and glycine 184–leucine 204.

This sequence belongs to the NqrDE/RnfAE family. The complex is composed of six subunits: RnfA, RnfB, RnfC, RnfD, RnfE and RnfG.

It localises to the cell inner membrane. Its function is as follows. Part of a membrane-bound complex that couples electron transfer with translocation of ions across the membrane. The chain is Ion-translocating oxidoreductase complex subunit E from Pseudomonas aeruginosa (strain UCBPP-PA14).